A 269-amino-acid polypeptide reads, in one-letter code: WW domain-binding protein 1 (269 aa).

Short sequence motifs (PPxY motif) lie at residues 124–127 (PPAY) and 137–141 (PPPPY). Disordered regions lie at residues 169–203 (EGTNVEGVSSHQSAPPHQEGEPGAGVTPASTPPSC) and 249–269 (PPESVPQIFPMGLSSSEGDIP). Polar residues predominate over residues 174–183 (EGVSSHQSAP).

In terms of assembly, interacts with NEDD4. Binds to the WW domain of YAP1, WWP1 and WWP2. Interacts with WWOX. In terms of tissue distribution, expressed in most tissues but at significantly lower levels in placenta, lung, liver, and kidney.

The sequence is that of WW domain-binding protein 1 (WBP1) from Homo sapiens (Human).